Consider the following 389-residue polypeptide: Chalcone synthase (389 aa).

Residue Cys164 is part of the active site.

It belongs to the thiolase-like superfamily. Chalcone/stilbene synthases family.

It catalyses the reaction (E)-4-coumaroyl-CoA + 3 malonyl-CoA + 3 H(+) = 2',4,4',6'-tetrahydroxychalcone + 3 CO2 + 4 CoA. The protein operates within secondary metabolite biosynthesis; flavonoid biosynthesis. The primary product of this enzyme is 4,2',4',6'-tetrahydroxychalcone (also termed naringenin-chalcone or chalcone) which can under specific conditions spontaneously isomerize into naringenin. The protein is Chalcone synthase (CHS) of Catharanthus roseus (Madagascar periwinkle).